A 565-amino-acid polypeptide reads, in one-letter code: MAQRIFTLILLLCSTSVFAGLFDAPGRSQFVPADQAFAFDFQQNQHDLNLTWQIKDGYYLYRKQIRITPEHAKIADVQLPQGVWHEDEFYGKSEIYRDRLTLPVTINQASAGATLTVTYQGCADAGFCYPPETKTVPLSEVVANNAAPQPVSVPQQEQPTAQLPFSALWALLIGIGIAFTPCVLPMYPLISGIVLGGKQRLSTARALLLTFIYVQGMALTYTALGLVVAAAGLQFQAALQHPYVLIGLAIVFTLLAMSMFGLFTLQLPSSLQTRLTLMSNRQQGGSPGGVFVMGAIAGLICSPCTTAPLSAILLYIAQSGNMWLGGGTLYLYALGMGLPLMLITVFGNRLLPKSGPWMEQVKTAFGFVILALPVFLLERVIGDVWGLRLWSALGVAFFGWAFITSLQAKRGWMRIVQIILLAAALVSVRPLQDWAFGATHTAQTQTHLNFTQIKTVDELNQALVEAKGKPVMLDLYADWCVACKEFEKYTFSDPQVQKALADTVLLQANVTANDAQDVALLKHLNVLGLPTILFFDGQGQEHPQARVTGFMDAETFSAHLRDRQP.

The signal sequence occupies residues 1-19 (MAQRIFTLILLLCSTSVFA). The Periplasmic portion of the chain corresponds to 20 to 162 (GLFDAPGRSQ…VPQQEQPTAQ (143 aa)). 2 disulfide bridges follow: Cys-122–Cys-128 and Cys-182–Cys-304. Residues 163-183 (LPFSALWALLIGIGIAFTPCV) traverse the membrane as a helical segment. Topologically, residues 184–207 (LPMYPLISGIVLGGKQRLSTARAL) are cytoplasmic. Residues 208-228 (LLTFIYVQGMALTYTALGLVV) traverse the membrane as a helical segment. Residues 229 to 242 (AAAGLQFQAALQHP) are Periplasmic-facing. A helical membrane pass occupies residues 243–263 (YVLIGLAIVFTLLAMSMFGLF). The Cytoplasmic portion of the chain corresponds to 264–295 (TLQLPSSLQTRLTLMSNRQQGGSPGGVFVMGA). A helical membrane pass occupies residues 296 to 316 (IAGLICSPCTTAPLSAILLYI). At 317–322 (AQSGNM) the chain is on the periplasmic side. The chain crosses the membrane as a helical span at residues 323–343 (WLGGGTLYLYALGMGLPLMLI). Residues 344-356 (TVFGNRLLPKSGP) lie on the Cytoplasmic side of the membrane. The helical transmembrane segment at 357 to 377 (WMEQVKTAFGFVILALPVFLL) threads the bilayer. The Periplasmic portion of the chain corresponds to 378–383 (ERVIGD). A helical membrane pass occupies residues 384–404 (VWGLRLWSALGVAFFGWAFIT). The Cytoplasmic portion of the chain corresponds to 405–417 (SLQAKRGWMRIVQ). The chain crosses the membrane as a helical span at residues 418 to 438 (IILLAAALVSVRPLQDWAFGA). Positions 434-565 (WAFGATHTAQ…FSAHLRDRQP (132 aa)) constitute a Thioredoxin domain. Topologically, residues 439 to 565 (THTAQTQTHL…FSAHLRDRQP (127 aa)) are periplasmic. A disulfide bridge links Cys-480 with Cys-483.

It belongs to the thioredoxin family. DsbD subfamily.

The protein resides in the cell inner membrane. The enzyme catalyses [protein]-dithiol + NAD(+) = [protein]-disulfide + NADH + H(+). It carries out the reaction [protein]-dithiol + NADP(+) = [protein]-disulfide + NADPH + H(+). Required to facilitate the formation of correct disulfide bonds in some periplasmic proteins and for the assembly of the periplasmic c-type cytochromes. Acts by transferring electrons from cytoplasmic thioredoxin to the periplasm, thereby maintaining the active site of DsbC, DsbE and DsbG in a reduced state. This transfer involves a cascade of disulfide bond formation and reduction steps. The sequence is that of Thiol:disulfide interchange protein DsbD (dsbD) from Escherichia coli (strain K12).